Consider the following 334-residue polypeptide: Trans-1,2-dihydrobenzene-1,2-diol dehydrogenase (334 aa).

Belongs to the Gfo/Idh/MocA family. Homodimer. In terms of tissue distribution, kidney.

The enzyme catalyses (1R,2R)-1,2-dihydrobenzene-1,2-diol + NADP(+) = catechol + NADPH + H(+). The catalysed reaction is D-xylose + NADP(+) = D-xylono-1,5-lactone + NADPH + H(+). The protein is Trans-1,2-dihydrobenzene-1,2-diol dehydrogenase (DHDH) of Macaca fascicularis (Crab-eating macaque).